Here is a 428-residue protein sequence, read N- to C-terminus: Tyrosine--tRNA ligase (428 aa).

Residue Tyr-41 coordinates L-tyrosine. Positions 46–55 (PTADSLHLGH) match the 'HIGH' region motif. Residues Tyr-179 and Gln-183 each coordinate L-tyrosine. The short motif at 239-243 (KFGKT) is the 'KMSKS' region element. ATP is bound at residue Lys-242. The region spanning 361-418 (ADLLQALVDSELQPSRGQARKTVASNAVTINGEKQADPEYVFSDSDRLFGRYTLLRRG) is the S4 RNA-binding domain.

Belongs to the class-I aminoacyl-tRNA synthetase family. TyrS type 1 subfamily. Homodimer.

The protein localises to the cytoplasm. The catalysed reaction is tRNA(Tyr) + L-tyrosine + ATP = L-tyrosyl-tRNA(Tyr) + AMP + diphosphate + H(+). Its function is as follows. Catalyzes the attachment of tyrosine to tRNA(Tyr) in a two-step reaction: tyrosine is first activated by ATP to form Tyr-AMP and then transferred to the acceptor end of tRNA(Tyr). The polypeptide is Tyrosine--tRNA ligase (Klebsiella pneumoniae subsp. pneumoniae (strain ATCC 700721 / MGH 78578)).